We begin with the raw amino-acid sequence, 344 residues long: tRNA N6-adenosine threonylcarbamoyltransferase (344 aa).

Histidine 114 and histidine 118 together coordinate Fe cation. Substrate is bound by residues 136-140, aspartate 170, glycine 183, aspartate 187, and asparagine 278; that span reads LVSGG. Aspartate 306 provides a ligand contact to Fe cation.

This sequence belongs to the KAE1 / TsaD family. It depends on Fe(2+) as a cofactor.

The protein localises to the cytoplasm. It carries out the reaction L-threonylcarbamoyladenylate + adenosine(37) in tRNA = N(6)-L-threonylcarbamoyladenosine(37) in tRNA + AMP + H(+). In terms of biological role, required for the formation of a threonylcarbamoyl group on adenosine at position 37 (t(6)A37) in tRNAs that read codons beginning with adenine. Is involved in the transfer of the threonylcarbamoyl moiety of threonylcarbamoyl-AMP (TC-AMP) to the N6 group of A37, together with TsaE and TsaB. TsaD likely plays a direct catalytic role in this reaction. The protein is tRNA N6-adenosine threonylcarbamoyltransferase of Mycobacteroides abscessus (strain ATCC 19977 / DSM 44196 / CCUG 20993 / CIP 104536 / JCM 13569 / NCTC 13031 / TMC 1543 / L948) (Mycobacterium abscessus).